A 904-amino-acid polypeptide reads, in one-letter code: Phosphoenolpyruvate carboxylase (904 aa).

Residues 52-71 are disordered; it reads ISRRESDAPPSTLSEQLTGR. Residues His151 and Lys570 contribute to the active site.

This sequence belongs to the PEPCase type 1 family. Mg(2+) is required as a cofactor.

It catalyses the reaction oxaloacetate + phosphate = phosphoenolpyruvate + hydrogencarbonate. In terms of biological role, forms oxaloacetate, a four-carbon dicarboxylic acid source for the tricarboxylic acid cycle. This chain is Phosphoenolpyruvate carboxylase, found in Xanthomonas oryzae pv. oryzae (strain MAFF 311018).